Consider the following 62-residue polypeptide: Large ribosomal subunit protein uL29 (62 aa).

This sequence belongs to the universal ribosomal protein uL29 family.

The polypeptide is Large ribosomal subunit protein uL29 (Desulfosudis oleivorans (strain DSM 6200 / JCM 39069 / Hxd3) (Desulfococcus oleovorans)).